A 79-amino-acid chain; its full sequence is Sec-independent protein translocase protein TatA (79 aa).

The chain crosses the membrane as a helical span at residues 1-21 (MGGLQPWHWVIVIAVFVLLFG). Basic and acidic residues predominate over residues 43-52 (IKEMQSEGKS). The tract at residues 43–79 (IKEMQSEGKSDNPPATPITSERVDTNPTAEQPDKRSA) is disordered.

It belongs to the TatA/E family. The Tat system comprises two distinct complexes: a TatABC complex, containing multiple copies of TatA, TatB and TatC subunits, and a separate TatA complex, containing only TatA subunits. Substrates initially bind to the TatABC complex, which probably triggers association of the separate TatA complex to form the active translocon.

The protein resides in the cell membrane. In terms of biological role, part of the twin-arginine translocation (Tat) system that transports large folded proteins containing a characteristic twin-arginine motif in their signal peptide across membranes. TatA could form the protein-conducting channel of the Tat system. This is Sec-independent protein translocase protein TatA from Mycobacterium sp. (strain JLS).